We begin with the raw amino-acid sequence, 226 residues long: Endonuclease V (226 aa).

The Mg(2+) site is built by Asp-43 and Asp-108.

The protein belongs to the endonuclease V family. It depends on Mg(2+) as a cofactor.

It localises to the cytoplasm. The enzyme catalyses Endonucleolytic cleavage at apurinic or apyrimidinic sites to products with a 5'-phosphate.. Functionally, DNA repair enzyme involved in the repair of deaminated bases. Selectively cleaves double-stranded DNA at the second phosphodiester bond 3' to a deoxyinosine leaving behind the intact lesion on the nicked DNA. The sequence is that of Endonuclease V from Thermosipho melanesiensis (strain DSM 12029 / CIP 104789 / BI429).